The chain runs to 948 residues: 3-hydroxy-3-methylglutaryl-coenzyme A reductase (948 aa).

The next 6 helical transmembrane spans lie at Leu9–Ile25, Val55–Cys71, Leu96–Val112, Thr124–Leu140, Ile207–Ile223, and Cys286–Leu302. Asn316 is a glycosylation site (N-linked (GlcNAc...) asparagine). A helical transmembrane segment spans residues Val347–Phe363. Positions Lys364 to Leu466 are linker. An N-linked (GlcNAc...) asparagine glycan is attached at Asn430. The interval Gly467–Met948 is catalytic. Residues Glu567, Lys699, and Asp777 each act as charge relay system in the active site. His869 (proton donor) is an active-site residue. The N-linked (GlcNAc...) asparagine glycan is linked to Asn895.

It belongs to the HMG-CoA reductase family.

The protein resides in the endoplasmic reticulum membrane. Its subcellular location is the peroxisome membrane. It catalyses the reaction (R)-mevalonate + 2 NADP(+) + CoA = (3S)-3-hydroxy-3-methylglutaryl-CoA + 2 NADPH + 2 H(+). It participates in metabolic intermediate biosynthesis; (R)-mevalonate biosynthesis; (R)-mevalonate from acetyl-CoA: step 3/3. In terms of biological role, this transmembrane glycoprotein is involved in the control of cholesterol and nonsterol isoprenoid compounds biosynthesis. It is the rate-limiting enzyme of sterol biosynthesis. The sequence is that of 3-hydroxy-3-methylglutaryl-coenzyme A reductase from Schistosoma mansoni (Blood fluke).